Consider the following 484-residue polypeptide: Transcription factor TGAL4 (484 aa).

Over residues 1-11 (MGEASSSSGHP) the composition is skewed to polar residues. Disordered regions lie at residues 1–22 (MGEA…GYGF), 84–137 (ATAA…NASS), and 155–181 (QQEQ…DPKT). Over residues 123-137 (SESSSKNNSNQNASS) the composition is skewed to low complexity. Positions 163–173 (ATNSPTHSSKT) are enriched in polar residues. Residues 178–222 (DPKTMRRLAQNREAARKSRLRKKAYIQQLESSKLKLAQMEQDIHR) form the bZIP domain. Residues 180–200 (KTMRRLAQNREAARKSRLRKK) are basic motif. The tract at residues 206–220 (LESSKLKLAQMEQDI) is leucine-zipper. The DOG1 domain maps to 241–455 (AAMFDVDYAR…RALSSLWASR (215 aa)).

Belongs to the bZIP family. As to quaternary structure, interacts with NPR1/NH1 and NPR3/NH3.

It is found in the nucleus. Its function is as follows. Transcriptional regulator involved in defense response. The sequence is that of Transcription factor TGAL4 from Oryza sativa subsp. japonica (Rice).